A 115-amino-acid chain; its full sequence is Procyclic form-specific polypeptide (115 aa).

The signal sequence occupies residues 1–27; the sequence is MAPRSLYLLAVLLFSANLFAGVGFAAA. Positions 27-97 are disordered; that stretch reads AAEGPEDKGL…PEPEPGAATL (71 aa). Residues 31-52 show a composition bias toward basic and acidic residues; that stretch reads PEDKGLTKGGKGKGEKGTKVGA. N-linked (GlcNAc...) asparagine glycosylation is present at N56. 17 repeat units span residues 59 to 60, 61 to 62, 63 to 64, 65 to 66, 67 to 68, 69 to 70, 71 to 72, 73 to 74, 75 to 76, 77 to 78, 79 to 80, 81 to 82, 83 to 84, 85 to 86, 87 to 88, 89 to 90, and 91 to 92. The 17 X 2 AA tandem repeats of [DE]-P stretch occupies residues 59-92; that stretch reads DPDPEPEPEPEPEPEPEPEPEPEPEPEPEPEPEP. A compositionally biased stretch (acidic residues) spans 60–90; it reads PDPEPEPEPEPEPEPEPEPEPEPEPEPEPEP. G93 carries the GPI-anchor amidated glycine lipid modification. The propeptide at 94–115 is removed in mature form; that stretch reads AATLKSVALPFAIAAAALVAAF.

It localises to the cell membrane. In terms of biological role, major surface antigen of procyclic forms. The sequence is that of Procyclic form-specific polypeptide (PROA) from Trypanosoma brucei brucei.